The chain runs to 326 residues: Protein phosphatase PTC7 homolog fig (326 aa).

The tract at residues 40-83 (VQGKSKPRSPHLTSPQCSPEHRPRRFRPPSASGRTAFSSAPRPK) is disordered. The 251-residue stretch at 64–314 (RFRPPSASGR…DDITVVLASV (251 aa)) folds into the PPM-type phosphatase domain. Residues Asp91, Gly92, and Asp236 each coordinate Mn(2+).

It belongs to the PP2C family. It depends on Mg(2+) as a cofactor. Requires Mn(2+) as cofactor.

It catalyses the reaction O-phospho-L-seryl-[protein] + H2O = L-seryl-[protein] + phosphate. The catalysed reaction is O-phospho-L-threonyl-[protein] + H2O = L-threonyl-[protein] + phosphate. The chain is Protein phosphatase PTC7 homolog fig from Drosophila persimilis (Fruit fly).